We begin with the raw amino-acid sequence, 176 residues long: ATP synthase subunit d, mitochondrial (176 aa).

In terms of assembly, F-type ATP synthases have 2 components, the catalytic core F(1) and the membrane-embedded component F(0), linked together by a central stalk and a peripheral stalk. The central stalk, also called rotor shaft, is often seen as part of F(1). The peripheral stalk is seen as part of F(0). F(0) contains the membrane channel next to the rotor. F-type ATP synthases form dimers but each monomer functions independently in ATP generation. The dimer consists of 17 different polypeptides: ATP1 (subunit alpha, 3 molecules per monomer, part of F(1)), ATP2 (subunit beta, 3 copies per monomer, part of F(1)), ATP3 (subunit gamma, part of the central stalk), ATP4 (subunit b, part of the peripheral stalk), ATP5/OSCP (subunit 5/OSCP, part of the peripheral stalk), ATP6 (subunit a, part of the peripheral stalk), ATP7 (subunit d, part of the peripheral stalk), ATP8 (subunit 8, part of the peripheral stalk), OLI1 (subunit c, part of the rotor, 10 molecules per monomer), ATP14 (subunit h, part of the peripheral stalk), ATP15 (subunit epsilon, part of the central stalk), ATP16 (subunit delta, part of the central stalk), ATP17 (subunit f, part of the peripheral stalk), ATP18 (subunit i/j, part of the peripheral stalk), ATP19 (subunit k, dimer-specific, at interface between monomers), ATP20 (subunit g, at interface between monomers), TIM11 (subunit e, at interface between monomers).

The protein localises to the mitochondrion inner membrane. Mitochondrial membrane ATP synthase (F(1)F(0) ATP synthase or Complex V) produces ATP from ADP in the presence of a proton gradient across the membrane which is generated by electron transport complexes of the respiratory chain. F-type ATP synthases consist of two structural domains, F(1) - containing the extramembraneous catalytic core, and F(0) - containing the membrane proton channel, linked together by a central stalk and a peripheral stalk. During catalysis, ATP synthesis in the catalytic domain of F(1) is coupled via a rotary mechanism of the central stalk subunits to proton translocation. Part of the complex F(0) domain and the peripheral stalk, which acts as a stator to hold the catalytic alpha/ATP1(3)beta/ATP2(3) subcomplex and subunit a/ATP6 static relative to the rotary elements. The chain is ATP synthase subunit d, mitochondrial from Yarrowia lipolytica (strain CLIB 122 / E 150) (Yeast).